A 479-amino-acid polypeptide reads, in one-letter code: Ribosomal RNA small subunit methyltransferase F (479 aa).

Residues 125–131 (AAAPGSK), E149, D176, and D194 each bind S-adenosyl-L-methionine. The active-site Nucleophile is C247.

Belongs to the class I-like SAM-binding methyltransferase superfamily. RsmB/NOP family.

The protein resides in the cytoplasm. The enzyme catalyses cytidine(1407) in 16S rRNA + S-adenosyl-L-methionine = 5-methylcytidine(1407) in 16S rRNA + S-adenosyl-L-homocysteine + H(+). In terms of biological role, specifically methylates the cytosine at position 1407 (m5C1407) of 16S rRNA. In Escherichia coli (strain SMS-3-5 / SECEC), this protein is Ribosomal RNA small subunit methyltransferase F.